A 296-amino-acid chain; its full sequence is Glycine N-acyltransferase (296 aa).

3 positions are modified to N6-acetyllysine; alternate: Lys-16, Lys-127, and Lys-141. N6-succinyllysine; alternate occurs at positions 16, 127, and 141. An N6-acetyllysine modification is found at Lys-159. An N6-succinyllysine modification is found at Lys-169. N6-acetyllysine; alternate is present on residues Lys-183 and Lys-256. 2 positions are modified to N6-succinyllysine; alternate: Lys-183 and Lys-256.

Belongs to the glycine N-acyltransferase family.

Its subcellular location is the mitochondrion. It carries out the reaction an acyl-CoA + glycine = an N-acylglycine + CoA + H(+). It catalyses the reaction benzoyl-CoA + glycine = N-benzoylglycine + CoA + H(+). In terms of biological role, mitochondrial acyltransferase which transfers an acyl group to the N-terminus of glycine and glutamine, although much less efficiently. Can conjugate a multitude of substrates to form a variety of N-acylglycines, thereby detoxify xenobiotics, such as benzoic acid or salicylic acid, and endogenous organic acids, such as isovaleric acid. The protein is Glycine N-acyltransferase (GLYAT) of Pongo abelii (Sumatran orangutan).